A 325-amino-acid chain; its full sequence is Eukaryotic translation initiation factor 3 subunit I (325 aa).

WD repeat units lie at residues 8–47 (GHERSITQIKYNREGDLLFTVAKDPIVNVWYSVNGERLGT), 50–91 (GHTG…ALLK), 144–183 (CNDSKITSAVWGPLGECIIAGHESGELNQYSAKSGEVLVN), and 186–225 (EHSRQINDIQLSRDMTMFVTASKDNTAKLFDSTTLEHQKT). Thr219 is subject to Phosphothreonine. Lys264 carries the N6-acetyllysine modification. Residue Lys282 forms a Glycyl lysine isopeptide (Lys-Gly) (interchain with G-Cter in ubiquitin) linkage. One copy of the WD 5 repeat lies at 283–324 (GHFGLINSVAFHPDGKSYSSGGEDGYVRIHYFDPQYFEFEFE). Tyr308 bears the Phosphotyrosine mark.

It belongs to the eIF-3 subunit I family. In terms of assembly, component of the eukaryotic translation initiation factor 3 (eIF-3) complex, which is composed of 13 subunits: EIF3A, EIF3B, EIF3C, EIF3D, EIF3E, EIF3F, EIF3G, EIF3H, EIF3I, EIF3J, EIF3K, EIF3L and EIF3M. The eIF-3 complex appears to include 3 stable modules: module A is composed of EIF3A, EIF3B, EIF3G and EIF3I; module B is composed of EIF3F, EIF3H, and EIF3M; and module C is composed of EIF3C, EIF3D, EIF3E, EIF3K and EIF3L. EIF3C of module C binds EIF3B of module A and EIF3H of module B, thereby linking the three modules. EIF3J is a labile subunit that binds to the eIF-3 complex via EIF3B. The eIF-3 complex interacts with RPS6KB1 under conditions of nutrient depletion. Mitogenic stimulation leads to binding and activation of a complex composed of MTOR and RPTOR, leading to phosphorylation and release of RPS6KB1 and binding of EIF4B to eIF-3. Phosphorylated by TGF-beta type II receptor.

It localises to the cytoplasm. In terms of biological role, component of the eukaryotic translation initiation factor 3 (eIF-3) complex, which is required for several steps in the initiation of protein synthesis. The eIF-3 complex associates with the 40S ribosome and facilitates the recruitment of eIF-1, eIF-1A, eIF-2:GTP:methionyl-tRNAi and eIF-5 to form the 43S pre-initiation complex (43S PIC). The eIF-3 complex stimulates mRNA recruitment to the 43S PIC and scanning of the mRNA for AUG recognition. The eIF-3 complex is also required for disassembly and recycling of post-termination ribosomal complexes and subsequently prevents premature joining of the 40S and 60S ribosomal subunits prior to initiation. The eIF-3 complex specifically targets and initiates translation of a subset of mRNAs involved in cell proliferation, including cell cycling, differentiation and apoptosis, and uses different modes of RNA stem-loop binding to exert either translational activation or repression. This Pongo abelii (Sumatran orangutan) protein is Eukaryotic translation initiation factor 3 subunit I.